A 187-amino-acid chain; its full sequence is Peroxisome assembly protein 22 (187 aa).

Residues 7–29 (NTFFGLAALGALGLGYSVYKSFI) form a helical membrane-spanning segment.

The protein belongs to the peroxin-22 family. As to quaternary structure, interacts with PEX4.

Its subcellular location is the peroxisome membrane. Involved in peroxisome biogenesis. In Komagataella pastoris (Yeast), this protein is Peroxisome assembly protein 22 (PEX22).